The sequence spans 65 residues: Large ribosomal subunit protein bL35 (65 aa).

The protein belongs to the bacterial ribosomal protein bL35 family.

The sequence is that of Large ribosomal subunit protein bL35 from Wolbachia sp. subsp. Brugia malayi (strain TRS).